The sequence spans 183 residues: Inosine triphosphate pyrophosphatase (183 aa).

8 to 13 (TGNKNK) provides a ligand contact to ITP. A Mg(2+)-binding site is contributed by Glu36. Residues Lys48, 64–65 (DT), Lys81, 140–143 (FGWD), Lys161, and 166–167 (HR) each bind ITP.

Belongs to the HAM1 NTPase family. In terms of assembly, homodimer. Mg(2+) serves as cofactor. It depends on Mn(2+) as a cofactor.

The protein localises to the cytoplasm. Its subcellular location is the nucleus. It catalyses the reaction ITP + H2O = IMP + diphosphate + H(+). The enzyme catalyses dITP + H2O = dIMP + diphosphate + H(+). It carries out the reaction XTP + H2O = XMP + diphosphate + H(+). Its function is as follows. Pyrophosphatase that hydrolyzes non-canonical purine nucleotides such as inosine triphosphate (ITP), deoxyinosine triphosphate (dITP) or xanthosine 5'-triphosphate (XTP) to their respective monophosphate derivatives. The enzyme does not distinguish between the deoxy- and ribose forms. Probably excludes non-canonical purines from RNA and DNA precursor pools, thus preventing their incorporation into RNA and DNA and avoiding chromosomal lesions. The chain is Inosine triphosphate pyrophosphatase from Ajellomyces capsulatus (strain G186AR / H82 / ATCC MYA-2454 / RMSCC 2432) (Darling's disease fungus).